The sequence spans 503 residues: Adenosine deaminase 2-A (503 aa).

The N-terminal stretch at M1 to G24 is a signal peptide. 2 residues coordinate Zn(2+): H105 and H107. Residue D108 coordinates substrate. A glycan (N-linked (GlcNAc...) asparagine) is linked at N120. Cysteines 130 and 152 form a disulfide. N-linked (GlcNAc...) asparagine glycans are attached at residues N167 and N178. Substrate is bound by residues W197–F204 and H286. A glycan (N-linked (GlcNAc...) asparagine) is linked at N290. G319 is a binding site for substrate. Residue H349 coordinates Zn(2+). E352 (proton donor) is an active-site residue. The N-linked (GlcNAc...) asparagine glycan is linked to N371. Residue H377 is the Proton acceptor of the active site. A Zn(2+)-binding site is contributed by D434. A substrate-binding site is contributed by D435.

Belongs to the metallo-dependent hydrolases superfamily. Adenosine and AMP deaminases family. ADGF subfamily. The cofactor is Zn(2+).

It is found in the secreted. The catalysed reaction is adenosine + H2O + H(+) = inosine + NH4(+). Functionally, adenosine deaminase that may contribute to the degradation of extracellular adenosine, a signaling molecule that controls a variety of cellular responses. May play a role in the regulation of cell proliferation. The protein is Adenosine deaminase 2-A of Danio rerio (Zebrafish).